The sequence spans 87 residues: Small ribosomal subunit protein bS20 (87 aa).

It belongs to the bacterial ribosomal protein bS20 family.

Its function is as follows. Binds directly to 16S ribosomal RNA. This chain is Small ribosomal subunit protein bS20, found in Corynebacterium jeikeium (strain K411).